Reading from the N-terminus, the 217-residue chain is Octanoyltransferase (217 aa).

The BPL/LPL catalytic domain maps to 33-208 (SSSQDEIWLV…KLCSLLGIAS (176 aa)). Residues 72–79 (RGGQVTYH), 139–141 (SIG), and 152–154 (GLA) each bind substrate. The active-site Acyl-thioester intermediate is the Cys-170.

This sequence belongs to the LipB family.

Its subcellular location is the cytoplasm. The catalysed reaction is octanoyl-[ACP] + L-lysyl-[protein] = N(6)-octanoyl-L-lysyl-[protein] + holo-[ACP] + H(+). It participates in protein modification; protein lipoylation via endogenous pathway; protein N(6)-(lipoyl)lysine from octanoyl-[acyl-carrier-protein]: step 1/2. In terms of biological role, catalyzes the transfer of endogenously produced octanoic acid from octanoyl-acyl-carrier-protein onto the lipoyl domains of lipoate-dependent enzymes. Lipoyl-ACP can also act as a substrate although octanoyl-ACP is likely to be the physiological substrate. The sequence is that of Octanoyltransferase from Pseudoalteromonas atlantica (strain T6c / ATCC BAA-1087).